The sequence spans 486 residues: Zinc transporter 6 (486 aa).

Residues 1–60 (MVALDVLGITDSDAPVYRQKQEADTLVLGTIHPFRKAHRSVLGKLAQEFRLVTSDRRSWK) lie on the Cytoplasmic side of the membrane. A helical transmembrane segment spans residues 61–81 (ILLFGVLNVVCTGCLLMWCSS). Residues 82 to 91 (TNSMALTAYT) are Extracellular-facing. The chain crosses the membrane as a helical span at residues 92 to 112 (YLTIFDLFSLITCLLSLWVTM). The Cytoplasmic segment spans residues 113–125 (KKPSQIYSFGFQR). Residues 126 to 146 (FEVLAVFSSTVLVQLGSLFIL) form a helical membrane-spanning segment. Residues 147-161 (KESVERFVEQPEVHT) lie on the Extracellular side of the membrane. A helical membrane pass occupies residues 162-182 (GRLLVGTFVALFFNLLTLLSV). The Cytoplasmic segment spans residues 183–227 (KNKPFVFVSEAASTSWLQEHVADLSRSLCGLIPALSSFLLPRMNP). Residues 228–248 (FVLINLAGAFALGITYMLIEI) form a helical membrane-spanning segment. The Extracellular segment spans residues 249 to 255 (NNYNAMD). Residues 256-276 (TASAVAIALMTFGTMYPMSVY) traverse the membrane as a helical segment. The Cytoplasmic portion of the chain corresponds to 277 to 486 (SGKVLLQTTP…SGTYTGPPRP (210 aa)). Over residues 394-411 (PSRAQGSEPTPATSTPAK) the composition is skewed to low complexity. The segment at 394-425 (PSRAQGSEPTPATSTPAKPSSPPPEFSFHTPG) is disordered.

It belongs to the cation diffusion facilitator (CDF) transporter (TC 2.A.4) family. SLC30A subfamily. In terms of assembly, heterodimer with SLC30A5; form a functional zinc ion transmembrane transporter.

Its subcellular location is the golgi apparatus. It localises to the trans-Golgi network membrane. Its function is as follows. Has probably no intrinsic transporter activity but together with SLC30A5 forms a functional zinc ion:proton antiporter heterodimer, mediating zinc entry into the lumen of organelles along the secretory pathway. As part of that zinc ion:proton antiporter, contributes to zinc ion homeostasis within the early secretory pathway and regulates the activation and folding of enzymes like alkaline phosphatases and enzymes involved in phosphatidylinositol glycan anchor biosynthesis. This Danio rerio (Zebrafish) protein is Zinc transporter 6 (slc30a6).